A 316-amino-acid polypeptide reads, in one-letter code: Pantothenate kinase (316 aa).

Glycine 96–serine 103 is an ATP binding site.

The protein belongs to the prokaryotic pantothenate kinase family.

It is found in the cytoplasm. It catalyses the reaction (R)-pantothenate + ATP = (R)-4'-phosphopantothenate + ADP + H(+). Its pathway is cofactor biosynthesis; coenzyme A biosynthesis; CoA from (R)-pantothenate: step 1/5. The protein is Pantothenate kinase of Shouchella clausii (strain KSM-K16) (Alkalihalobacillus clausii).